The following is a 331-amino-acid chain: Tetraspanin-10 (331 aa).

The tract at residues 1 to 34 (MKEEECSPLLSQDTAGREHPLTRNSPPTANIPCP) is disordered. Residues 1-76 (MKEEECSPLL…LSTGSNCVKY (76 aa)) lie on the Cytoplasmic side of the membrane. A helical membrane pass occupies residues 77–97 (LIFLSNFLFSLPSLLALAAGL). At 98-120 (WGLTVKRSQGIGWGGPVPTDPML) the chain is on the extracellular side. The chain crosses the membrane as a helical span at residues 121–141 (MLVLGGLVVSVVSLSGCLGAF). The Cytoplasmic segment spans residues 142-152 (CENSCLLHWYC). The helical transmembrane segment at 153 to 173 (GAVLFCLALEALAGVLMVTLW) threads the bilayer. Over 174-331 (KPLQDSLKYT…AAEDIEAGPL (158 aa)) the chain is Extracellular. 4 disulfides stabilise this stretch: Cys210/Cys277, Cys211/Cys241, Cys227/Cys235, and Cys242/Cys256. Asn226 carries N-linked (GlcNAc...) asparagine glycosylation.

Belongs to the tetraspanin (TM4SF) family. In terms of assembly, interacts with ADAM10.

Its subcellular location is the cell membrane. In terms of biological role, part of TspanC8 subgroup, composed of 6 members that interact with the transmembrane metalloprotease ADAM10. This interaction is required for ADAM10 exit from the endoplasmic reticulum and for enzymatic maturation and trafficking to the cell surface as well as substrate specificity. Different TspanC8/ADAM10 complexes have distinct substrates. The protein is Tetraspanin-10 (Tspan10) of Mus musculus (Mouse).